Consider the following 161-residue polypeptide: Nucleotide-binding protein Sfri_0732 (161 aa).

The protein belongs to the YajQ family.

Functionally, nucleotide-binding protein. The sequence is that of Nucleotide-binding protein Sfri_0732 from Shewanella frigidimarina (strain NCIMB 400).